A 64-amino-acid chain; its full sequence is Large ribosomal subunit protein bL35 (64 aa).

Positions 1 to 27 (MPKMKTKSGAKKRFKPTASGFKHKHAF) are disordered.

It belongs to the bacterial ribosomal protein bL35 family.

This is Large ribosomal subunit protein bL35 from Azotobacter vinelandii (strain DJ / ATCC BAA-1303).